Consider the following 67-residue polypeptide: Arasin 2 (67 aa).

Residues 1–25 form the signal peptide; it reads MERRTLLVVLLVCSCVVAAAAEASP. Residues 22 to 44 form a disordered region; sequence EASPSRWPSPGRPRPFPGRPNPI. Over residues 31-44 the composition is skewed to pro residues; the sequence is PGRPRPFPGRPNPI. 2 disulfides stabilise this stretch: C50–C59 and C52–C57.

Interacts with chitin through the N-terminal region (26-48). This interaction may be important, since chitin is a component of the fungal cell wall, as well as of the crab exoskeleton (permitting a possible action of arasin in wound healing in case of lesions). Disulfide bonds are important for activity especially against Gram-negative bacteria, since the linearization of the peptide causes a strong decrease of activity on these bacteria. As to expression, mainly expressed in hemocytes. No or very low expression in heart, gills, inestines, and epidermis.

In terms of biological role, antimicrobial peptide that has a large activity spectrum with activity against Gram-positive, Gram-negative bacteria, as well as against fungi. Shows activity at micromolar concentrations. Displays minimal inhibitory concentration (MIC) values lower than minimal bactericidal concentrations (MBC). May have a dual mode of action depending on the peptide concentrations. At MIC concentrations, the peptide penetrates into the cytoplasm of target cells (tested on the Gram-negative E.coli). The two inner membrane proteins YgdD and SbmA may be required for this uptake. At concentrations higher than MIC, arasin may act by disrupting membranes. Does not show hemolytic activity. This Hyas araneus (Atlantic lyre crab) protein is Arasin 2.